The primary structure comprises 754 residues: Endothelin-converting enzyme 1 (754 aa).

The Cytoplasmic portion of the chain corresponds to 1-52 (MMSTYKRATLDEEDLVDSLSESDVYPNHLQVNFRGPRNGQRCWAARTPVEKR). Position 9 is a phosphothreonine (threonine 9). The chain crosses the membrane as a helical; Signal-anchor for type II membrane protein span at residues 53-73 (LVVLVALLAAALVACLAVLGI). Residues 74–754 (QYQTRTPSVC…MNPHHKCEVW (681 aa)) are Extracellular-facing. A Peptidase M13 domain is found at 82 to 754 (VCLSEACISV…MNPHHKCEVW (673 aa)). 5 disulfide bridges follow: cysteine 83-cysteine 88, cysteine 106-cysteine 739, cysteine 114-cysteine 699, cysteine 169-cysteine 419, and cysteine 628-cysteine 751. N-linked (GlcNAc...) asparagine glycans are attached at residues asparagine 150, asparagine 171, asparagine 194, asparagine 254, asparagine 300, asparagine 346, asparagine 367, and asparagine 523. Histidine 591 is a Zn(2+) binding site. The active site involves glutamate 592. Histidine 595 contacts Zn(2+). N-linked (GlcNAc...) asparagine glycans are attached at residues asparagine 616 and asparagine 635. Glutamate 651 provides a ligand contact to Zn(2+). The Proton donor role is filled by aspartate 655.

The protein belongs to the peptidase M13 family. Homodimer; disulfide-linked. Interacts with PPP1R16B. Interacts with TSPAN8; this interaction recruits the endothelin converting enzyme ECE1 to tetraspanin-enriched microdomains and positively modulates its enzymatic activity. Zn(2+) serves as cofactor.

The protein localises to the cell membrane. The enzyme catalyses Hydrolysis of the 21-Trp-|-Val-22 bond in big endothelin to form endothelin 1.. Inhibited by phosphoramidon. Its function is as follows. Converts big endothelin-1 to endothelin-1. The chain is Endothelin-converting enzyme 1 (ECE1) from Bos taurus (Bovine).